Reading from the N-terminus, the 190-residue chain is MSNVLRPALSLIVLMSLITGVAYPLVVTGVAQVAFPAQANGSLVYDAAGKVRGSALIAQSFTGDEWFQSRPSAGAFATVASGASNFAPSNPALVTRVKEDVAKLANASQEPVPLALLTTSGSGLDPHLSPEAIAWQAGRVAAARQLPLEKVQALIDANTQRPLIGPPVVNVLALNMSLNQLPSAPRNAQL.

A helical transmembrane segment spans residues 11–31 (LIVLMSLITGVAYPLVVTGVA).

This sequence belongs to the KdpC family. As to quaternary structure, the system is composed of three essential subunits: KdpA, KdpB and KdpC.

It localises to the cell inner membrane. Functionally, part of the high-affinity ATP-driven potassium transport (or Kdp) system, which catalyzes the hydrolysis of ATP coupled with the electrogenic transport of potassium into the cytoplasm. This subunit acts as a catalytic chaperone that increases the ATP-binding affinity of the ATP-hydrolyzing subunit KdpB by the formation of a transient KdpB/KdpC/ATP ternary complex. The polypeptide is Potassium-transporting ATPase KdpC subunit (Pseudomonas savastanoi pv. phaseolicola (strain 1448A / Race 6) (Pseudomonas syringae pv. phaseolicola (strain 1448A / Race 6))).